Reading from the N-terminus, the 343-residue chain is Putative outer membrane protein y4fJ (343 aa).

The signal sequence occupies residues 1–17 (MRMNFSTVLLGSSVALA).

The protein belongs to the alphaproteobacteria porin family.

Its subcellular location is the cell outer membrane. Its function is as follows. May act as an outer membrane pore. This chain is Putative outer membrane protein y4fJ, found in Sinorhizobium fredii (strain NBRC 101917 / NGR234).